We begin with the raw amino-acid sequence, 306 residues long: D-alanine--D-alanine ligase (306 aa).

One can recognise an ATP-grasp domain in the interval 102–300 (KIIAANAGVC…YGDIVQWMVE (199 aa)). Position 128 to 183 (128 to 183 (PMEPPYVIKPVCEGSSFGVVIVQENEAVPPHNIGGSEWGYADEVMVEKYIPGRELT)) interacts with ATP. Mg(2+) contacts are provided by D253, E267, and N269.

This sequence belongs to the D-alanine--D-alanine ligase family. The cofactor is Mg(2+). Mn(2+) is required as a cofactor.

It localises to the cytoplasm. The catalysed reaction is 2 D-alanine + ATP = D-alanyl-D-alanine + ADP + phosphate + H(+). It participates in cell wall biogenesis; peptidoglycan biosynthesis. Cell wall formation. The polypeptide is D-alanine--D-alanine ligase (Bartonella tribocorum (strain CIP 105476 / IBS 506)).